Consider the following 192-residue polypeptide: Small ribosomal subunit protein bS16 (192 aa).

Residues alanine 153–glutamate 192 form a disordered region. Residues valine 178–glutamate 192 show a composition bias toward low complexity.

Belongs to the bacterial ribosomal protein bS16 family.

This Porphyromonas gingivalis (strain ATCC BAA-308 / W83) protein is Small ribosomal subunit protein bS16.